The sequence spans 291 residues: MLEIVIITGMSGAGKSLAIRAFEDMGFFCIDNLPPQFLPKIAELASATKEKISRIAAVVDIRGGELFDDFKDVLQELKKDDRNFKLLFLDAHDEVLIKRYKETRRKHPLSHEGDGSILEAIQKEREKLEDIKRYADFVIDTSTLLPKDLKEKLFEIFVQQKSKEAMLITIMSFGFKYGLPLDADLVFDVRFIPNPFYVDTLKYKTGKDPEVKEYVLKWDVTKEFLQKLFDLILFLIPNYAEEGKGQLVIAIGCTGGKHRSVTVAEELKKTIENQGYKVSIFHRDIEKDIKG.

9 to 16 lines the ATP pocket; that stretch reads GMSGAGKS. GTP is bound at residue 60–63; that stretch reads DIRG.

The protein belongs to the RapZ-like family.

Functionally, displays ATPase and GTPase activities. The chain is Nucleotide-binding protein Athe_0320 from Caldicellulosiruptor bescii (strain ATCC BAA-1888 / DSM 6725 / KCTC 15123 / Z-1320) (Anaerocellum thermophilum).